The sequence spans 552 residues: Glutamine-dependent NAD(+) synthetase (552 aa).

The 241-residue stretch at 5 to 245 (FRITLAQLNP…EAVVHVDLER (241 aa)) folds into the CN hydrolase domain. E45 acts as the Proton acceptor; for glutaminase activity in catalysis. Residue K113 is the For glutaminase activity of the active site. The Nucleophile; for glutaminase activity role is filled by C149. L-glutamine contacts are provided by S175 and K181. The tract at residues 275 to 552 (LQDYLRKSGF…PMVNRWRDQS (278 aa)) is ligase. 290–297 (GLSGGIDS) is a binding site for ATP. Deamido-NAD(+) is bound at residue N373. ATP is bound at residue T397. Deamido-NAD(+) is bound by residues E402 and K521.

It in the C-terminal section; belongs to the NAD synthetase family.

The catalysed reaction is deamido-NAD(+) + L-glutamine + ATP + H2O = L-glutamate + AMP + diphosphate + NAD(+) + H(+). Its pathway is cofactor biosynthesis; NAD(+) biosynthesis; NAD(+) from deamido-NAD(+) (L-Gln route): step 1/1. Catalyzes the ATP-dependent amidation of deamido-NAD to form NAD. Uses L-glutamine as a nitrogen source. The chain is Glutamine-dependent NAD(+) synthetase from Rhodobacter capsulatus (Rhodopseudomonas capsulata).